The following is an 83-amino-acid chain: MKTLLLTLVVVTIVCLDLGYTRICFNHQSSQPQTTKTCSPGESSCYHKQWSDFRGTIIERGCGCPTVKPGIKLSCCESEVCNN.

Residues 1–21 form the signal peptide; it reads MKTLLLTLVVVTIVCLDLGYT. Residues 24 to 38 are loop I; sequence CFNHQSSQPQTTKTC. 4 disulfides stabilise this stretch: C24-C45, C38-C62, C64-C75, and C76-C81. Positions 39–44 are stretch between loop I and loop II; that stretch reads SPGESS. The loop II stretch occupies residues 45-62; sequence CYHKQWSDFRGTIIERGC. The loop III stretch occupies residues 64-75; that stretch reads CPTVKPGIKLSC.

It belongs to the three-finger toxin family. Short-chain subfamily. Type I alpha-neurotoxin sub-subfamily. Expressed by the venom gland.

Its subcellular location is the secreted. Its function is as follows. Binds with high affinity to muscular nicotinic acetylcholine receptors (nAChRs) (tested on Torpedo marmorata, Kd=0.07 nM), and with low affinity to neuronal alpha-7/CHRNA7 nAChRs (tested on chimeric alpha-7/CHRNA7, Kd=22 uM) and inhibit acetylcholine from binding to the receptor, thereby impairing neuromuscular transmission. Produces peripheral paralysis by blocking neuromuscular transmission at the postsynaptic site. The sequence is that of Erabutoxin b from Laticauda semifasciata (Black-banded sea krait).